Consider the following 176-residue polypeptide: Protein Dr1 (176 aa).

At alanine 2 the chain carries N-acetylalanine. In terms of domain architecture, Histone-fold spans threonine 12–leucine 75. The Nuclear localization signal motif lies at lysine 100–lysine 103. A phosphoserine mark is found at serine 105, serine 106, serine 166, and serine 167. The segment covering glutamine 152 to serine 167 has biased composition (low complexity). The tract at residues glutamine 152–isoleucine 176 is disordered.

Belongs to the NC2 beta/DR1 family. As to quaternary structure, heterodimer with DRAP1. DR1 exists in solution as a homotetramer that dissociates during interaction with TBP and then, after complexing with TBP, reassociates at a slow rate, to reconstitute the tetramer. Interacts with NFIL3. Component of the ADA2A-containing complex (ATAC), composed of KAT14, KAT2A, TADA2L, TADA3L, ZZ3, MBIP, WDR5, YEATS2, CCDC101 and DR1. In terms of processing, phosphorylation regulates its interaction with TBP. Not phosphorylated when bound to DRAP1.

Its subcellular location is the nucleus. Functionally, the association of the DR1/DRAP1 heterodimer with TBP results in a functional repression of both activated and basal transcription of class II genes. This interaction precludes the formation of a transcription-competent complex by inhibiting the association of TFIIA and/or TFIIB with TBP. Can bind to DNA on its own. Component of the ATAC complex, a complex with histone acetyltransferase activity on histones H3 and H4. This is Protein Dr1 (DR1) from Homo sapiens (Human).